A 193-amino-acid polypeptide reads, in one-letter code: Probable DNA-directed RNA polymerase subunit delta (193 aa).

Positions 14–83 (LSMIEVARAI…GENKWGLRSW (70 aa)) constitute an HTH HARE-type domain. 2 stretches are compositionally biased toward acidic residues: residues 117-134 (GDDD…DEDN) and 142-193 (EYDD…VVDE). The tract at residues 117-193 (GDDDAIDYGH…EYSDEEVVDE (77 aa)) is disordered.

This sequence belongs to the RpoE family. In terms of assembly, RNAP is composed of a core of 2 alpha, a beta and a beta' subunits. The core is associated with a delta subunit and one of several sigma factors.

Its function is as follows. Participates in both the initiation and recycling phases of transcription. In the presence of the delta subunit, RNAP displays an increased specificity of transcription, a decreased affinity for nucleic acids, and an increased efficiency of RNA synthesis because of enhanced recycling. This is Probable DNA-directed RNA polymerase subunit delta from Streptococcus suis (strain 05ZYH33).